The primary structure comprises 195 residues: HTH-type transcriptional regulator BetI (195 aa).

Residues 8 to 68 (EIRRAQLIDA…ATMRHVLRDL (61 aa)) form the HTH tetR-type domain. The segment at residues 31–50 (TLASVAQRANISTGIVSHYF) is a DNA-binding region (H-T-H motif).

It participates in amine and polyamine biosynthesis; betaine biosynthesis via choline pathway [regulation]. In terms of biological role, repressor involved in the biosynthesis of the osmoprotectant glycine betaine. It represses transcription of the choline transporter BetT and the genes of BetAB involved in the synthesis of glycine betaine. This is HTH-type transcriptional regulator BetI from Burkholderia mallei (strain NCTC 10247).